A 483-amino-acid polypeptide reads, in one-letter code: Regulatory protein ViaA (483 aa).

Belongs to the ViaA family. In terms of assembly, homodimer. Interacts with RavA.

The protein localises to the cytoplasm. In terms of biological role, component of the RavA-ViaA chaperone complex, which may act on the membrane to optimize the function of some of the respiratory chains. ViaA stimulates the ATPase activity of RavA. The sequence is that of Regulatory protein ViaA from Shigella dysenteriae serotype 1 (strain Sd197).